Reading from the N-terminus, the 248-residue chain is Protein FAM133A (248 aa).

Basic and acidic residues predominate over residues 68-80 (NWKKELEKSREKL). The segment at 68 to 248 (NWKKELEKSR…KKSGSSHKSR (181 aa)) is disordered. Over residues 90 to 102 (KRERKKKRKKKSC) the composition is skewed to basic residues. Low complexity predominate over residues 103–118 (RSSSSSSSSDSSSSSS). Over residues 127–138 (QGKRRKKKKNRS) the composition is skewed to basic residues. Composition is skewed to basic and acidic residues over residues 147–156 (HESESESKES), 163–175 (SKDETEKEKDVRS), and 211–220 (RCEEREQAKE). Over residues 221–248 (KVKKKKKKQHKKHSKKKKKKSGSSHKSR) the composition is skewed to basic residues.

The protein belongs to the FAM133 family.

The protein is Protein FAM133A (FAM133A) of Homo sapiens (Human).